We begin with the raw amino-acid sequence, 123 residues long: Large ribosomal subunit protein bL20 (123 aa).

This sequence belongs to the bacterial ribosomal protein bL20 family.

Functionally, binds directly to 23S ribosomal RNA and is necessary for the in vitro assembly process of the 50S ribosomal subunit. It is not involved in the protein synthesizing functions of that subunit. The chain is Large ribosomal subunit protein bL20 from Ehrlichia ruminantium (strain Gardel).